Here is a 449-residue protein sequence, read N- to C-terminus: Trigger factor (449 aa).

A PPIase FKBP-type domain is found at 173–258 (GDRVTVDFVG…LKKVEWPHLP (86 aa)).

It belongs to the FKBP-type PPIase family. Tig subfamily.

The protein localises to the cytoplasm. The enzyme catalyses [protein]-peptidylproline (omega=180) = [protein]-peptidylproline (omega=0). Its function is as follows. Involved in protein export. Acts as a chaperone by maintaining the newly synthesized protein in an open conformation. Functions as a peptidyl-prolyl cis-trans isomerase. This is Trigger factor from Burkholderia pseudomallei (strain 1710b).